The primary structure comprises 243 residues: Carboxy-S-adenosyl-L-methionine synthase (243 aa).

S-adenosyl-L-methionine contacts are provided by residues Tyr-40, Gly-65–Ser-67, Asp-90–Asn-91, Asp-118–Ile-119, Asn-133, and Arg-200.

The protein belongs to the class I-like SAM-binding methyltransferase superfamily. Cx-SAM synthase family. In terms of assembly, homodimer.

It carries out the reaction prephenate + S-adenosyl-L-methionine = carboxy-S-adenosyl-L-methionine + 3-phenylpyruvate + H2O. Functionally, catalyzes the conversion of S-adenosyl-L-methionine (SAM) to carboxy-S-adenosyl-L-methionine (Cx-SAM). The sequence is that of Carboxy-S-adenosyl-L-methionine synthase from Shewanella sp. (strain ANA-3).